The primary structure comprises 956 residues: Matrilin-2 (956 aa).

An N-terminal signal peptide occupies residues Met-1–Gly-23. Positions Asp-57–Phe-232 constitute a VWFA 1 domain. The N-linked (GlcNAc...) asparagine glycan is linked to Asn-221. 10 EGF-like domains span residues Thr-238 to Arg-278, Ile-279 to Thr-319, Ala-320 to Ser-360, Lys-361 to Arg-401, Arg-402 to Ser-442, Arg-443 to Ser-483, Arg-484 to Ala-524, Lys-525 to Arg-565, Arg-566 to Arg-606, and Arg-607 to Lys-647. Disulfide bonds link Cys-242-Cys-253, Cys-249-Cys-262, Cys-264-Cys-277, Cys-283-Cys-294, Cys-290-Cys-303, Cys-305-Cys-318, Cys-324-Cys-335, Cys-331-Cys-344, Cys-346-Cys-359, Cys-365-Cys-376, Cys-372-Cys-385, Cys-387-Cys-400, Cys-406-Cys-417, Cys-413-Cys-426, Cys-428-Cys-441, Cys-447-Cys-458, Cys-454-Cys-467, Cys-469-Cys-482, Cys-488-Cys-499, Cys-495-Cys-508, Cys-510-Cys-523, Cys-529-Cys-540, Cys-536-Cys-549, Cys-551-Cys-564, Cys-570-Cys-581, Cys-577-Cys-590, Cys-592-Cys-605, Cys-611-Cys-622, Cys-618-Cys-631, and Cys-633-Cys-646. The 176-residue stretch at Asp-655 to Leu-830 folds into the VWFA 2 domain. Asn-890 carries an N-linked (GlcNAc...) asparagine glycan. Residues Lys-917–Tyr-955 adopt a coiled-coil conformation.

As to expression, detected in a variety of organs, including calvaria, uterus, heart and brain, as well as fibroblast and osteoblast cell lines.

The protein localises to the secreted. Functionally, involved in matrix assembly. The chain is Matrilin-2 (Matn2) from Mus musculus (Mouse).